Here is a 244-residue protein sequence, read N- to C-terminus: tRNA1(Val) (adenine(37)-N6)-methyltransferase (244 aa).

Belongs to the methyltransferase superfamily. tRNA (adenine-N(6)-)-methyltransferase family.

It localises to the cytoplasm. It carries out the reaction adenosine(37) in tRNA1(Val) + S-adenosyl-L-methionine = N(6)-methyladenosine(37) in tRNA1(Val) + S-adenosyl-L-homocysteine + H(+). Its function is as follows. Specifically methylates the adenine in position 37 of tRNA(1)(Val) (anticodon cmo5UAC). In Shewanella sediminis (strain HAW-EB3), this protein is tRNA1(Val) (adenine(37)-N6)-methyltransferase.